We begin with the raw amino-acid sequence, 157 residues long: Small ribosomal subunit protein uS7 (157 aa).

The protein belongs to the universal ribosomal protein uS7 family. As to quaternary structure, part of the 30S ribosomal subunit. Contacts proteins S9 and S11.

In terms of biological role, one of the primary rRNA binding proteins, it binds directly to 16S rRNA where it nucleates assembly of the head domain of the 30S subunit. Is located at the subunit interface close to the decoding center, probably blocks exit of the E-site tRNA. This chain is Small ribosomal subunit protein uS7, found in Chlamydia abortus (strain DSM 27085 / S26/3) (Chlamydophila abortus).